The sequence spans 427 residues: Serine--tRNA ligase (427 aa).

230-232 (TAE) serves as a coordination point for L-serine. 261 to 263 (RAE) contributes to the ATP binding site. E284 is a binding site for L-serine. Residue 348–351 (EISS) participates in ATP binding. S384 serves as a coordination point for L-serine.

Belongs to the class-II aminoacyl-tRNA synthetase family. Type-1 seryl-tRNA synthetase subfamily. In terms of assembly, homodimer. The tRNA molecule binds across the dimer.

The protein resides in the cytoplasm. The catalysed reaction is tRNA(Ser) + L-serine + ATP = L-seryl-tRNA(Ser) + AMP + diphosphate + H(+). It carries out the reaction tRNA(Sec) + L-serine + ATP = L-seryl-tRNA(Sec) + AMP + diphosphate + H(+). It functions in the pathway aminoacyl-tRNA biosynthesis; selenocysteinyl-tRNA(Sec) biosynthesis; L-seryl-tRNA(Sec) from L-serine and tRNA(Sec): step 1/1. Catalyzes the attachment of serine to tRNA(Ser). Is also able to aminoacylate tRNA(Sec) with serine, to form the misacylated tRNA L-seryl-tRNA(Sec), which will be further converted into selenocysteinyl-tRNA(Sec). This is Serine--tRNA ligase from Moorella thermoacetica (strain ATCC 39073 / JCM 9320).